Reading from the N-terminus, the 768-residue chain is U-box domain-containing protein 45 (768 aa).

The U-box domain maps to 278–352; the sequence is VPPEELRCPI…SSWCEQNGVQ (75 aa). 5 ARM repeats span residues 454-497, 500-540, 542-579, 581-620, and 623-662; these read EEAR…NLAV, NRNK…CLEE, KPVIGSSLAVPFMVNLLWTETEVQCKVDALHSLFHLST, PPNIPCLLSADLVNALQSLTISDEQRWTEKSLAVLLNLVL, and AGKDEMVSAPSLVSNLCTILDTGEPNEQEQAVSLLLILCN.

As to quaternary structure, binds to SD129.

The enzyme catalyses S-ubiquitinyl-[E2 ubiquitin-conjugating enzyme]-L-cysteine + [acceptor protein]-L-lysine = [E2 ubiquitin-conjugating enzyme]-L-cysteine + N(6)-ubiquitinyl-[acceptor protein]-L-lysine.. The protein operates within protein modification; protein ubiquitination. Its function is as follows. Functions as an E3 ubiquitin ligase. This chain is U-box domain-containing protein 45 (PUB45), found in Arabidopsis thaliana (Mouse-ear cress).